The following is a 68-amino-acid chain: Basic phospholipase A2 homolog BdipTx-I (68 aa).

C28 and C44 form a disulfide bridge.

It belongs to the phospholipase A2 family. Group II subfamily. K49 sub-subfamily. As to expression, expressed by the venom gland.

Its subcellular location is the secreted. In terms of biological role, snake venom phospholipase A2 (PLA2) that lacks enzymatic activity. Is myotoxic, induces edema, and causes systemic effects (renal changes that lead to proteinuria) on mice. A model of myotoxic mechanism has been proposed: an apo Lys49-PLA2 is activated by the entrance of a hydrophobic molecule (e.g. fatty acid) at the hydrophobic channel of the protein leading to a reorientation of a monomer. This reorientation causes a transition between 'inactive' to 'active' states, causing alignment of C-terminal and membrane-docking sites (MDoS) side-by-side and putting the membrane-disruption sites (MDiS) in the same plane, exposed to solvent and in a symmetric position for both monomers. The MDoS region stabilizes the toxin on membrane by the interaction of charged residues with phospholipid head groups. Subsequently, the MDiS region destabilizes the membrane with penetration of hydrophobic residues. This insertion causes a disorganization of the membrane, allowing an uncontrolled influx of ions (i.e. calcium and sodium), and eventually triggering irreversible intracellular alterations and cell death. This Bothrops diporus (Chaco lancehead) protein is Basic phospholipase A2 homolog BdipTx-I.